The sequence spans 143 residues: Large ribosomal subunit protein uL11 (143 aa).

This sequence belongs to the universal ribosomal protein uL11 family. Part of the ribosomal stalk of the 50S ribosomal subunit. Interacts with L10 and the large rRNA to form the base of the stalk. L10 forms an elongated spine to which L12 dimers bind in a sequential fashion forming a multimeric L10(L12)X complex. In terms of processing, one or more lysine residues are methylated.

Forms part of the ribosomal stalk which helps the ribosome interact with GTP-bound translation factors. In Koribacter versatilis (strain Ellin345), this protein is Large ribosomal subunit protein uL11.